A 740-amino-acid polypeptide reads, in one-letter code: Ethylene receptor 1 (740 aa).

3 helical membrane passes run 23 to 43, 54 to 74, and 92 to 112; these read ISDF…IYFV, VLVQ…INLW, and VLTA…IPDL. Positions 65 and 69 each coordinate Cu cation. In terms of domain architecture, GAF spans 158–307; sequence DRHTILKTTL…VVADQVAVAL (150 aa). The 239-residue stretch at 350-588 folds into the Histidine kinase domain; that stretch reads VMNHEMRTPM…TFIVKLGIAD (239 aa). At H353 the chain carries Phosphohistidine; by autocatalysis. Residues 614 to 731 form the Response regulatory domain; the sequence is KVLVMDDNGV…KMRSVLSELI (118 aa). D662 bears the 4-aspartylphosphate mark.

It belongs to the ethylene receptor family. In terms of assembly, homodimer; disulfide-linked. The cofactor is Cu cation. In terms of processing, activation probably requires a transfer of a phosphate group between a His in the transmitter domain and an Asp of the receiver domain. In seeds and placenta.

The protein localises to the endoplasmic reticulum membrane. It catalyses the reaction ATP + protein L-histidine = ADP + protein N-phospho-L-histidine.. Functionally, may act early in the ethylene signal transduction pathway, possibly as an ethylene receptor, or as a regulator of the pathway. The polypeptide is Ethylene receptor 1 (ETR1) (Cucumis melo var. cantalupensis (Netted muskmelon)).